The sequence spans 582 residues: Protein alan shepard (582 aa).

Over residues 1–12 (MHPRYSPAPPPQ) the composition is skewed to pro residues. Positions 1–73 (MHPRYSPAPP…AAPPTSRSAF (73 aa)) are disordered. Tyr5 carries the post-translational modification Phosphotyrosine. Residues 13–24 (QQQQMGGPLHQQ) show a composition bias toward low complexity. The span at 25-36 (QGGGGGGGGGIR) shows a compositional bias: gly residues. The segment covering 39-57 (SNAQQLPPQIPRSQNYSNG) has biased composition (polar residues). The segment covering 58–72 (SSSSAAAAPPTSRSA) has biased composition (low complexity). Residues Tyr125 and Tyr142 each carry the phosphotyrosine modification. The tract at residues 164–225 (PATTTYGQRV…TVQNQNQQGG (62 aa)) is disordered. A compositionally biased stretch (low complexity) spans 178-225 (SPSNTNSSSSSNTGSQSGTLSTSLSNTTNTNTNMGPNGTVQNQNQQGG). 2 consecutive RRM domains span residues 231–304 (TNLY…MAKQ) and 310–389 (TNLY…FADG). The segment at 555–582 (PMTDSEQASTAASPDEAYTQYPHQAAPK) is disordered.

Its function is as follows. Has a role in the perception of gravity. The protein is Protein alan shepard of Drosophila yakuba (Fruit fly).